A 1386-amino-acid chain; its full sequence is DNA-directed RNA polymerase subunit beta (1386 aa).

It belongs to the RNA polymerase beta chain family. As to quaternary structure, the RNAP catalytic core consists of 2 alpha, 1 beta, 1 beta' and 1 omega subunit. When a sigma factor is associated with the core the holoenzyme is formed, which can initiate transcription.

The catalysed reaction is RNA(n) + a ribonucleoside 5'-triphosphate = RNA(n+1) + diphosphate. Functionally, DNA-dependent RNA polymerase catalyzes the transcription of DNA into RNA using the four ribonucleoside triphosphates as substrates. The protein is DNA-directed RNA polymerase subunit beta of Nitratiruptor sp. (strain SB155-2).